The chain runs to 499 residues: Dipeptide and tripeptide permease A (499 aa).

Residues 1-34 (MSTANKKPAESVSMNAFKQPRSFYLIFSIELWER) are Cytoplasmic-facing. A helical membrane pass occupies residues 35 to 55 (FGFYGLQGIMAVYLVKQLGMS). The Periplasmic portion of the chain corresponds to 56 to 59 (EADS). Residues 60-80 (ITLFSSFSALVYGLVAIGGWL) traverse the membrane as a helical segment. Residues 81-89 (GDKVLGTKR) are Cytoplasmic-facing. A helical membrane pass occupies residues 90–110 (VIMLGTIVLAIGYALVAWSGH). Position 111 (Asp111) is a topological domain, periplasmic. A helical transmembrane segment spans residues 112–132 (AAIVYFGMATIAVGNGLFKAN). At 133–153 (PSALLSTCYEKDDPRLDGAFT) the chain is on the cytoplasmic side. A helical membrane pass occupies residues 154–174 (MYYMAINIGSFFSMLATPWLA). Residues 175–178 (EKFG) lie on the Periplasmic side of the membrane. Residues 179–199 (WSVAFSLSFVGMLITLVNFIF) form a helical membrane-spanning segment. Topologically, residues 200-217 (CKKWVKDYGSKPDFAPLH) are cytoplasmic. Residues 218-238 (VGKLLATIVGIVVLVAIATWL) traverse the membrane as a helical segment. The Periplasmic portion of the chain corresponds to 239-246 (LHNQGIAR). Residues 247–267 (LVLGVVALGIVIIFAKEAFAM) form a helical membrane-spanning segment. At 268–274 (QGAARRK) the chain is on the cytoplasmic side. The helical transmembrane segment at 275 to 295 (MIVAFILMLEAIVFFVLYQQM) threads the bilayer. Residues 296-320 (PTSLNFFAIRNVEHSILGIAFQPEQ) lie on the Periplasmic side of the membrane. Residues 321–341 (FQALNPFWIMIGSPILAAIYN) form a helical membrane-spanning segment. At 342–350 (KMGDRLPMP) the chain is on the cytoplasmic side. A helical transmembrane segment spans residues 351 to 371 (FKFTIGMLLCSGAFLVLPLGA). Residues 372-383 (KFASEAGIVSVN) lie on the Periplasmic side of the membrane. The helical transmembrane segment at 384–404 (WLILSYALQSIGELMISGLGL) threads the bilayer. The Cytoplasmic segment spans residues 405–414 (AMVAQLVPQR). The chain crosses the membrane as a helical span at residues 415 to 435 (LMGFIMGSWFLTTAGAAMIAG). At 436-459 (KVANLMAVPENVSDPLQSLEVYGR) the chain is on the periplasmic side. The chain crosses the membrane as a helical span at residues 460–480 (VFMQIGIATGVIAVLMLLTAP). Residues 481-499 (LLNRMTQEDKPKETDTAHA) lie on the Cytoplasmic side of the membrane.

It belongs to the major facilitator superfamily. Proton-dependent oligopeptide transporter (POT/PTR) (TC 2.A.17) family. DtpA subfamily.

It is found in the cell inner membrane. Proton-dependent permease that transports di- and tripeptides. This Cronobacter turicensis (strain DSM 18703 / CCUG 55852 / LMG 23827 / z3032) protein is Dipeptide and tripeptide permease A.